The sequence spans 952 residues: Lysosomal alpha-glucosidase (952 aa).

The signal sequence occupies residues 1-27 (MGVRHPPCSHRLLAVCALVSLATAALL). A propeptide spanning residues 28-69 (GHILLHDFLLVPRELSGSSPVLEETHPAHQQGASRPGPRDAQ) is cleaved from the precursor. A disordered region spans residues 47–82 (PVLEETHPAHQQGASRPGPRDAQAHPGRPRAVPTQC). The region spanning 80-131 (TQCDVPPNSRFDCAPDKAITQEQCEARGCCYIPAKQGLQGAQMGQPWCFFPP) is the P-type domain. 3 cysteine pairs are disulfide-bonded: cysteine 82-cysteine 109, cysteine 92-cysteine 108, and cysteine 103-cysteine 127. 3 N-linked (GlcNAc...) asparagine glycosylation sites follow: asparagine 140, asparagine 233, and asparagine 390. Residue aspartate 404 coordinates substrate. Asparagine 470 is a glycosylation site (N-linked (GlcNAc...) asparagine). Catalysis depends on aspartate 518, which acts as the Nucleophile. Glutamate 521 is a catalytic residue. The cysteines at positions 533 and 558 are disulfide-linked. The substrate site is built by arginine 600 and aspartate 616. The cysteines at positions 647 and 658 are disulfide-linked. Asparagine 652 carries an N-linked (GlcNAc...) asparagine glycan. Histidine 674 is a substrate binding site. Residues asparagine 882 and asparagine 925 are each glycosylated (N-linked (GlcNAc...) asparagine).

The protein belongs to the glycosyl hydrolase 31 family. The different forms of acid glucosidase are obtained by proteolytic processing. Post-translationally, phosphorylation of mannose residues ensures efficient transport of the enzyme to the lysosomes via the mannose 6-phosphate receptor.

Its subcellular location is the lysosome. The protein localises to the lysosome membrane. It carries out the reaction Hydrolysis of terminal, non-reducing (1-&gt;4)-linked alpha-D-glucose residues with release of alpha-D-glucose.. Its function is as follows. Essential for the degradation of glycogen in lysosomes. Has highest activity on alpha-1,4-linked glycosidic linkages, but can also hydrolyze alpha-1,6-linked glucans. The sequence is that of Lysosomal alpha-glucosidase (GAA) from Homo sapiens (Human).